We begin with the raw amino-acid sequence, 222 residues long: 2-C-methyl-D-erythritol 4-phosphate cytidylyltransferase (222 aa).

The protein belongs to the IspD/TarI cytidylyltransferase family. IspD subfamily.

It carries out the reaction 2-C-methyl-D-erythritol 4-phosphate + CTP + H(+) = 4-CDP-2-C-methyl-D-erythritol + diphosphate. The protein operates within isoprenoid biosynthesis; isopentenyl diphosphate biosynthesis via DXP pathway; isopentenyl diphosphate from 1-deoxy-D-xylulose 5-phosphate: step 2/6. Its function is as follows. Catalyzes the formation of 4-diphosphocytidyl-2-C-methyl-D-erythritol from CTP and 2-C-methyl-D-erythritol 4-phosphate (MEP). The sequence is that of 2-C-methyl-D-erythritol 4-phosphate cytidylyltransferase from Thermotoga sp. (strain RQ2).